The sequence spans 828 residues: Periplasmic nitrate reductase (828 aa).

Positions 1-31 (MKLSRRSFMKANAVAAAAAAAGLSVPGVARA) form a signal peptide, tat-type signal. In terms of domain architecture, 4Fe-4S Mo/W bis-MGD-type spans 39–95 (IKWDKAPCRFCGTGCGVLVGTQQGRVVACQGDPDAPVNRGLNCIKGYFLPKIMYGKD). [4Fe-4S] cluster is bound by residues Cys46, Cys49, Cys53, and Cys81. Residues Lys83, Gln150, Asn175, Cys179, 212-219 (WGANMAEM), 243-247 (STYQH), 262-264 (QSD), Met372, Gln376, Asn482, 508-509 (SD), Lys531, Asp558, and 718-727 (TGRVLEHWHT) contribute to the Mo-bis(molybdopterin guanine dinucleotide) site. Phe794 is a binding site for substrate. 2 residues coordinate Mo-bis(molybdopterin guanine dinucleotide): Asn802 and Lys819.

This sequence belongs to the prokaryotic molybdopterin-containing oxidoreductase family. NasA/NapA/NarB subfamily. In terms of assembly, component of the periplasmic nitrate reductase NapAB complex composed of NapA and NapB. The cofactor is [4Fe-4S] cluster. Mo-bis(molybdopterin guanine dinucleotide) serves as cofactor. Predicted to be exported by the Tat system. The position of the signal peptide cleavage has not been experimentally proven.

It localises to the periplasm. The catalysed reaction is 2 Fe(II)-[cytochrome] + nitrate + 2 H(+) = 2 Fe(III)-[cytochrome] + nitrite + H2O. Functionally, catalytic subunit of the periplasmic nitrate reductase complex NapAB. Receives electrons from NapB and catalyzes the reduction of nitrate to nitrite. In Escherichia coli O9:H4 (strain HS), this protein is Periplasmic nitrate reductase.